The following is a 552-amino-acid chain: Non-structural protein NS1 (552 aa).

The protein belongs to the orbivirus non-structural protein NS1 family.

The chain is Non-structural protein NS1 (Segment-5) from Antilocapra americana (Pronghorn).